A 301-amino-acid chain; its full sequence is Probable alpha-L-glutamate ligase (301 aa).

The ATP-grasp domain occupies 104–287; it reads LQLLSRKGVG…IAGMIIEYIE (184 aa). Residues K141, 178–179, D187, and 211–213 each bind ATP; these read EY and RSN. Positions 248, 260, and 262 each coordinate Mg(2+). Mn(2+) contacts are provided by D248, E260, and N262.

The protein belongs to the RimK family. Mg(2+) is required as a cofactor. It depends on Mn(2+) as a cofactor.

The chain is Probable alpha-L-glutamate ligase from Photobacterium profundum (strain SS9).